The primary structure comprises 263 residues: Ribonuclease HII (263 aa).

In terms of domain architecture, RNase H type-2 spans 71–262; the sequence is QAIAGIDEVG…VKSMCCDSTN (192 aa). A divalent metal cation is bound by residues Asp-77, Glu-78, and Asp-172.

Belongs to the RNase HII family. Requires Mn(2+) as cofactor. Mg(2+) serves as cofactor.

Its subcellular location is the cytoplasm. The enzyme catalyses Endonucleolytic cleavage to 5'-phosphomonoester.. Its function is as follows. Endonuclease that specifically degrades the RNA of RNA-DNA hybrids. The protein is Ribonuclease HII of Streptococcus pyogenes serotype M4 (strain MGAS10750).